The following is a 92-amino-acid chain: MDGILRKLISIKDLHHCLQKFFVDERESIIEMNDNKLSEQFDLALIETHGKSKILKNLSLFKQTMSNYLTQLSKDNMKETENTVHKIKRVAA.

This is an uncharacterized protein from Haemophilus influenzae (strain ATCC 51907 / DSM 11121 / KW20 / Rd).